A 77-amino-acid chain; its full sequence is MKLTCVLIVAVLFLTACQLIAADDSRDLKRFSRRKMRDGMLNTKNTKRQCLPPLSLCTMDDDECCDDCILFLCLVTS.

Positions 1 to 22 (MKLTCVLIVAVLFLTACQLIAA) are cleaved as a signal peptide. Residues 23 to 46 (DDSRDLKRFSRRKMRDGMLNTKNT) constitute a propeptide that is removed on maturation. Pyrrolidone carboxylic acid is present on Gln49. Disulfide bonds link Cys50–Cys65, Cys57–Cys68, and Cys64–Cys73.

The protein belongs to the conotoxin O1 superfamily. In terms of tissue distribution, expressed by the venom duct.

The protein resides in the secreted. This Conus arenatus (Sand-dusted cone) protein is Conotoxin ArMKLT2-022.